Reading from the N-terminus, the 336-residue chain is Holliday junction branch migration complex subunit RuvB (336 aa).

The segment at 4–185 (MDERLLSGES…FGVLSRLEYY (182 aa)) is large ATPase domain (RuvB-L). Residues Leu24, Arg25, Gly66, Lys69, Thr70, Thr71, 132–134 (EDF), Arg175, Tyr185, and Arg222 contribute to the ATP site. Residue Thr70 coordinates Mg(2+). Residues 186–256 (TVDQLSAIVE…ITQMALELLQ (71 aa)) are small ATPAse domain (RuvB-S). The tract at residues 259–336 (KLGLDHIDHK…EHFGMEMPKV (78 aa)) is head domain (RuvB-H). The DNA site is built by Arg314 and Arg319.

This sequence belongs to the RuvB family. In terms of assembly, homohexamer. Forms an RuvA(8)-RuvB(12)-Holliday junction (HJ) complex. HJ DNA is sandwiched between 2 RuvA tetramers; dsDNA enters through RuvA and exits via RuvB. An RuvB hexamer assembles on each DNA strand where it exits the tetramer. Each RuvB hexamer is contacted by two RuvA subunits (via domain III) on 2 adjacent RuvB subunits; this complex drives branch migration. In the full resolvosome a probable DNA-RuvA(4)-RuvB(12)-RuvC(2) complex forms which resolves the HJ.

It is found in the cytoplasm. It catalyses the reaction ATP + H2O = ADP + phosphate + H(+). Its function is as follows. The RuvA-RuvB-RuvC complex processes Holliday junction (HJ) DNA during genetic recombination and DNA repair, while the RuvA-RuvB complex plays an important role in the rescue of blocked DNA replication forks via replication fork reversal (RFR). RuvA specifically binds to HJ cruciform DNA, conferring on it an open structure. The RuvB hexamer acts as an ATP-dependent pump, pulling dsDNA into and through the RuvAB complex. RuvB forms 2 homohexamers on either side of HJ DNA bound by 1 or 2 RuvA tetramers; 4 subunits per hexamer contact DNA at a time. Coordinated motions by a converter formed by DNA-disengaged RuvB subunits stimulates ATP hydrolysis and nucleotide exchange. Immobilization of the converter enables RuvB to convert the ATP-contained energy into a lever motion, pulling 2 nucleotides of DNA out of the RuvA tetramer per ATP hydrolyzed, thus driving DNA branch migration. The RuvB motors rotate together with the DNA substrate, which together with the progressing nucleotide cycle form the mechanistic basis for DNA recombination by continuous HJ branch migration. Branch migration allows RuvC to scan DNA until it finds its consensus sequence, where it cleaves and resolves cruciform DNA. The polypeptide is Holliday junction branch migration complex subunit RuvB (Bacillus thuringiensis (strain Al Hakam)).